The chain runs to 778 residues: General transcription and DNA repair factor IIH helicase subunit XPD/RAD3 (778 aa).

Residues aspartate 7 to glutamate 285 form the Helicase ATP-binding domain. Methionine 42–threonine 49 contributes to the ATP binding site. 4 residues coordinate [4Fe-4S] cluster: cysteine 115, cysteine 133, cysteine 156, and cysteine 191. Residues aspartate 235–histidine 238 carry the DEAH box motif. Residues serine 750–glycine 765 show a composition bias toward basic and acidic residues. The disordered stretch occupies residues serine 750–glutamine 778. Acidic residues predominate over residues glutamate 766–glutamine 778.

It belongs to the helicase family. RAD3/XPD subfamily. As to quaternary structure, component of the 7-subunit TFIIH core complex composed of XPB/SSL2, XPD/RAD3, SSL1, TFB1, TFB2, TFB4 and TFB5, which is active in NER. The core complex associates with the 3-subunit CTD-kinase module TFIIK composed of CCL1, KIN28 and TFB3 to form the 10-subunit holoenzyme (holo-TFIIH) active in transcription. An additionnal subunit, TFB6, plays a role in the dissociation of the SSL2 helicase from TFIIH after transcription initiation. [4Fe-4S] cluster is required as a cofactor. It depends on Mg(2+) as a cofactor.

The protein localises to the nucleus. It catalyses the reaction Couples ATP hydrolysis with the unwinding of duplex DNA at the replication fork by translocating in the 5'-3' direction. This creates two antiparallel DNA single strands (ssDNA). The leading ssDNA polymer is the template for DNA polymerase III holoenzyme which synthesizes a continuous strand.. The catalysed reaction is ATP + H2O = ADP + phosphate + H(+). In terms of biological role, ATP-dependent 5'-3' DNA helicase. Component of the general transcription and DNA repair factor IIH (TFIIH) core complex, which is involved in general and transcription-coupled nucleotide excision repair (NER) of damaged DNA and, when complexed to TFIIK, in RNA transcription by RNA polymerase II. In NER, TFIIH acts by opening DNA around the lesion to allow the excision of the damaged oligonucleotide and its replacement by a new DNA fragment. The ATP-dependent helicase activity of XPD/RAD3 is required for DNA opening. In transcription, TFIIH has an essential role in transcription initiation. When the pre-initiation complex (PIC) has been established, TFIIH is required for promoter opening and promoter escape. Phosphorylation of the C-terminal tail (CTD) of the largest subunit of RNA polymerase II by the kinase module TFIIK controls the initiation of transcription. XPD/RAD3 acts by forming a bridge between TFIIK and the core-TFIIH complex. Involved in the maintenance of the fidelity of DNA replication. Has single-stranded DNA-dependent ATPase activity. 5'-3' DNA helicase activity requires ATP (dATP partially substitutes), will unwind over 800 bp dsDNA. Able to unwind an RNA:DNA hybrid. The protein is General transcription and DNA repair factor IIH helicase subunit XPD/RAD3 of Saccharomyces cerevisiae (strain ATCC 204508 / S288c) (Baker's yeast).